The chain runs to 88 residues: Small ribosomal subunit protein uS15 (88 aa).

It belongs to the universal ribosomal protein uS15 family. Part of the 30S ribosomal subunit. Forms a bridge to the 50S subunit in the 70S ribosome, contacting the 23S rRNA.

In terms of biological role, one of the primary rRNA binding proteins, it binds directly to 16S rRNA where it helps nucleate assembly of the platform of the 30S subunit by binding and bridging several RNA helices of the 16S rRNA. Forms an intersubunit bridge (bridge B4) with the 23S rRNA of the 50S subunit in the ribosome. The sequence is that of Small ribosomal subunit protein uS15 from Acidovorax sp. (strain JS42).